We begin with the raw amino-acid sequence, 182 residues long: Large ribosomal subunit protein bL25 (182 aa).

The protein belongs to the bacterial ribosomal protein bL25 family. CTC subfamily. Part of the 50S ribosomal subunit; part of the 5S rRNA/L5/L18/L25 subcomplex. Contacts the 5S rRNA. Binds to the 5S rRNA independently of L5 and L18.

This is one of the proteins that binds to the 5S RNA in the ribosome where it forms part of the central protuberance. In Borreliella afzelii (strain PKo) (Borrelia afzelii), this protein is Large ribosomal subunit protein bL25.